The primary structure comprises 1204 residues: Cingulin (1204 aa).

The segment at 7 to 359 (MAEPRGPVDH…VMMSSGSSKA (353 aa)) is head. Residues 25–48 (EPVSGAEMGTLRRGGRRPAKDARA) form a disordered region. A ZIM motif is present at residues 48–62 (ASTYGVAVRVQGIAG). Positions 54-67 (AVRVQGIAGQPFVV) are interaction with TJP1/ZO1. Positions 68 to 269 (LNSGEKGGDS…SPLSGLSRAR (202 aa)) are disordered. Phosphoserine occurs at positions 95, 96, 98, 135, 137, 140, 155, and 165. Positions 126–140 (TQWNGKLLRSQSQAS) are enriched in polar residues. The segment covering 166-190 (PGSTIDTAPLSSVDSLINKFDSQLR) has biased composition (polar residues). Over residues 207-231 (EQRKRSKSLDSRLPRDTLEERERQS) the composition is skewed to basic and acidic residues. Residues Ser214, Ser217, Ser260, Ser278, Ser340, and Ser353 each carry the phosphoserine modification. Residues 360–1161 (VAGQGELTRK…SLEKDSWRKA (802 aa)) are a coiled coil. An N6-acetyllysine modification is found at Lys581. Positions 1156 to 1182 (DSWRKASRSAAESTLKHEGLSSDEEFD) are disordered. The segment at 1162-1204 (SRSAAESTLKHEGLSSDEEFDGVYDPSSIASLLTESNLQTSSC) is tail. Phosphoserine is present on residues Ser1176 and Ser1177.

It belongs to the cingulin family. In terms of assembly, homodimer. Interacts with TJP1/ZO1 and SPEF1.

The protein localises to the cell junction. The protein resides in the tight junction. Probably plays a role in the formation and regulation of the tight junction (TJ) paracellular permeability barrier. The protein is Cingulin of Callithrix jacchus (White-tufted-ear marmoset).